A 660-amino-acid polypeptide reads, in one-letter code: Pentatricopeptide repeat-containing protein At1g03560, mitochondrial (660 aa).

The N-terminal 12 residues, 1-12, are a transit peptide targeting the mitochondrion; the sequence is MRRFYRKPFSVP. 14 PPR repeats span residues 151–185, 186–220, 221–255, 256–290, 291–325, 326–360, 361–395, 396–430, 431–465, 466–496, 502–536, 537–571, 574–605, and 606–640; these read NLECYVSLVDVLALAKDVDRIRFVSSEIKKFEFPM, TVSAANALIKSFGKLGMVEELLWVWRKMKENGIEP, TLYTYNFLMNGLVSAMFVDSAERVFEVMESGRIKP, DIVTYNTMIKGYCKAGQTQKAMEKLRDMETRGHEA, DKITYMTMIQACYADSDFGSCVALYQEMDEKGIQV, PPHAFSLVIGGLCKEGKLNEGYTVFENMIRKGSKP, NVAIYTVLIDGYAKSGSVEDAIRLLHRMIDEGFKP, DVVTYSVVVNGLCKNGRVEEALDYFHTCRFDGLAI, NSMFYSSLIDGLGKAGRVDEAERLFEEMSEKGCTR, DSYCYNALIDAFTKHRKVDEAIALFKRMEEE, TVYTYTILLSGMFKEHRNEEALKLWDMMIDKGITP, TAACFRALSTGLCLSGKVARACKILDELAPMGVIL, ACEDMINTLCKAGRIKEACKLADGITERGREV, and PGRIRTVMINALRKVGKADLAMKLMHSKIGIGYER.

It belongs to the PPR family. P subfamily.

The protein localises to the mitochondrion. The chain is Pentatricopeptide repeat-containing protein At1g03560, mitochondrial from Arabidopsis thaliana (Mouse-ear cress).